A 202-amino-acid polypeptide reads, in one-letter code: Adapter protein MecA 2 (202 aa).

Belongs to the MecA family. Homodimer.

In terms of biological role, enables the recognition and targeting of unfolded and aggregated proteins to the ClpC protease or to other proteins involved in proteolysis. Acts negatively in the development of competence by binding ComK and recruiting it to the ClpCP protease. When overexpressed, inhibits sporulation. Also involved in Spx degradation by ClpC. In Bacillus cereus (strain ATCC 14579 / DSM 31 / CCUG 7414 / JCM 2152 / NBRC 15305 / NCIMB 9373 / NCTC 2599 / NRRL B-3711), this protein is Adapter protein MecA 2 (mecA2).